The following is a 103-amino-acid chain: Gibberellin-regulated protein 13 (103 aa).

An N-terminal signal peptide occupies residues 1–20 (MATKLSIIVFSIVVLHLLLS).

Belongs to the GASA family. Six disulfide bonds may be present.

It localises to the secreted. Gibberellin-regulated protein that may function in hormonal controlled steps of development such as seed germination, flowering and seed maturation. The sequence is that of Gibberellin-regulated protein 13 (GASA13) from Arabidopsis thaliana (Mouse-ear cress).